Reading from the N-terminus, the 66-residue chain is Xenoxin-3 (66 aa).

Disulfide bonds link Cys-3-Cys-24, Cys-17-Cys-37, Cys-43-Cys-58, and Cys-59-Cys-64.

In terms of tissue distribution, expressed by the skin dorsal glands.

It localises to the secreted. Functionally, lacks alpha-neurotoxic activity, has apparently no antibacterial activity, nor anti-coagulant potency. This is Xenoxin-3 from Xenopus laevis (African clawed frog).